The primary structure comprises 254 residues: Major prion protein (254 aa).

An N-terminal signal peptide occupies residues 1–28 (MANLGYWLLALFVTTCTDVGLCKKRPKP). The tract at residues 23 to 38 (KKRPKPGGWNTGGSRY) is interaction with ADGRG6. Positions 23–231 (KKRPKPGGWN…SQAYYDGRRS (209 aa)) are interaction with GRB2, ERI3 and SYN1. The disordered stretch occupies residues 24-107 (KRPKPGGWNT…QWNKPSKPKT (84 aa)). 5 repeat units span residues 51–59 (PQSGGTWGQ), 60–67 (PHGGGWGQ), 68–75 (PHGGGWGQ), 76–83 (PHGGGWGQ), and 84–91 (PHGGGWSQ). The tract at residues 51 to 91 (PQSGGTWGQPHGGGWGQPHGGGWGQPHGGGWGQPHGGGWSQ) is 5 X 8 AA tandem repeats of P-H-G-G-G-W-G-Q. Positions 55-95 (GTWGQPHGGGWGQPHGGGWGQPHGGGWGQPHGGGWSQGGGT) are enriched in gly residues. The Cu(2+) site is built by H61, G62, G63, H69, G70, G71, H77, G78, G79, H85, G86, and G87. C179 and C214 are oxidised to a cystine. N-linked (GlcNAc...) asparagine glycans are attached at residues N181 and N197. Residue S231 is the site of GPI-anchor amidated serine attachment. Residues 232–254 (SAVLFSSPPVILLISFLIFLIVG) constitute a propeptide, removed in mature form.

The protein belongs to the prion family. Monomer and homodimer. Has a tendency to aggregate into amyloid fibrils containing a cross-beta spine, formed by a steric zipper of superposed beta-strands. Soluble oligomers may represent an intermediate stage on the path to fibril formation. Copper binding may promote oligomerization. Interacts with GRB2, APP, ERI3/PRNPIP and SYN1. Mislocalized cytosolically exposed PrP interacts with MGRN1; this interaction alters MGRN1 subcellular location and causes lysosomal enlargement. Interacts with APP. Interacts with KIAA1191. Interacts with ADGRG6.

The protein resides in the cell membrane. The protein localises to the golgi apparatus. Its function is as follows. Its primary physiological function is unclear. May play a role in neuronal development and synaptic plasticity. May be required for neuronal myelin sheath maintenance. May promote myelin homeostasis through acting as an agonist for ADGRG6 receptor. May play a role in iron uptake and iron homeostasis. Soluble oligomers are toxic to cultured neuroblastoma cells and induce apoptosis (in vitro). Association with GPC1 (via its heparan sulfate chains) targets PRNP to lipid rafts. Also provides Cu(2+) or Zn(2+) for the ascorbate-mediated GPC1 deaminase degradation of its heparan sulfate side chains. The polypeptide is Major prion protein (Prnp) (Rattus norvegicus (Rat)).